A 237-amino-acid chain; its full sequence is Ribosomal RNA small subunit methyltransferase G (237 aa).

S-adenosyl-L-methionine-binding positions include G78, F83, 129-130, and R148; that span reads AE.

This sequence belongs to the methyltransferase superfamily. RNA methyltransferase RsmG family.

It is found in the cytoplasm. Its function is as follows. Specifically methylates the N7 position of a guanine in 16S rRNA. The sequence is that of Ribosomal RNA small subunit methyltransferase G from Streptococcus equi subsp. equi (strain 4047).